Reading from the N-terminus, the 262-residue chain is Small ribosomal subunit protein eS4 (262 aa).

One can recognise an S4 RNA-binding domain in the interval 42–105 (LPLIIMLRNR…GEFFRLLYDV (64 aa)).

Belongs to the eukaryotic ribosomal protein eS4 family.

This Ixodes scapularis (Black-legged tick) protein is Small ribosomal subunit protein eS4 (RpS4).